The primary structure comprises 123 residues: Large ribosomal subunit protein bL12 (123 aa).

Belongs to the bacterial ribosomal protein bL12 family. Homodimer. Part of the ribosomal stalk of the 50S ribosomal subunit. Forms a multimeric L10(L12)X complex, where L10 forms an elongated spine to which 2 to 4 L12 dimers bind in a sequential fashion. Binds GTP-bound translation factors.

Functionally, forms part of the ribosomal stalk which helps the ribosome interact with GTP-bound translation factors. Is thus essential for accurate translation. The protein is Large ribosomal subunit protein bL12 of Parvibaculum lavamentivorans (strain DS-1 / DSM 13023 / NCIMB 13966).